The following is an 81-amino-acid chain: High-potential iron-sulfur protein (81 aa).

Positions 43, 46, 59, and 73 each coordinate [4Fe-4S] cluster.

It belongs to the high-potential iron-sulfur protein (HiPIP) family. As to quaternary structure, homodimer.

It localises to the periplasm. Its function is as follows. Specific class of high-redox-potential 4Fe-4S ferredoxins. Functions in anaerobic electron transport in most purple and in some other photosynthetic bacteria and in at least one genus (Paracoccus) of halophilic, denitrifying bacteria. This is High-potential iron-sulfur protein from Halochromatium salexigens (Chromatium salexigens).